Here is a 160-residue protein sequence, read N- to C-terminus: Eosinophil cationic protein (160 aa).

A signal peptide spans 1-27; it reads MVPKLFTSQICLLLLLGLMGVEGSLHA. Positions 28–72 are required for nearly all of the bactericidal activity; partially involved in LPS-binding and bacterial membrane depolarization; it reads RPPQFTRAQWFAIQHISLNPPRCTIAMRAINNYRWRCKNQNTFLR. The active-site Proton acceptor is the histidine 42. Cystine bridges form between cysteine 50-cysteine 110, cysteine 64-cysteine 123, cysteine 82-cysteine 138, and cysteine 89-cysteine 98. Tyrosine 60 is modified (3'-nitrotyrosine). 65 to 69 contacts substrate; that stretch reads KNQNT. Residues asparagine 84, asparagine 92, and asparagine 119 are each glycosylated (N-linked (GlcNAc...) asparagine). Histidine 155 acts as the Proton donor in catalysis.

This sequence belongs to the pancreatic ribonuclease family. As to quaternary structure, interacts with bacterial lipopolysaccharide (LPS) and lipoteichoic acid (LTA). In vitro interacts with and insert into lipid bilayers composed of dioleoyl phosphatidylcholine and dioleoyl phosphatidylglycerol. In vitro, tends to form amyloid-like aggregates at pH 3, but not at pH 5, nor 7.

The protein resides in the secreted. Functionally, cytotoxin and helminthotoxin with low-efficiency ribonuclease activity. Possesses a wide variety of biological activities. Exhibits antibacterial activity, including cytoplasmic membrane depolarization of preferentially Gram-negative, but also Gram-positive strains. Promotes E.coli outer membrane detachment, alteration of the overall cell shape and partial loss of cell content. In Homo sapiens (Human), this protein is Eosinophil cationic protein (RNASE3).